The sequence spans 241 residues: 2-C-methyl-D-erythritol 4-phosphate cytidylyltransferase (241 aa).

It belongs to the IspD/TarI cytidylyltransferase family. IspD subfamily.

It catalyses the reaction 2-C-methyl-D-erythritol 4-phosphate + CTP + H(+) = 4-CDP-2-C-methyl-D-erythritol + diphosphate. The protein operates within isoprenoid biosynthesis; isopentenyl diphosphate biosynthesis via DXP pathway; isopentenyl diphosphate from 1-deoxy-D-xylulose 5-phosphate: step 2/6. Functionally, catalyzes the formation of 4-diphosphocytidyl-2-C-methyl-D-erythritol from CTP and 2-C-methyl-D-erythritol 4-phosphate (MEP). The chain is 2-C-methyl-D-erythritol 4-phosphate cytidylyltransferase from Baumannia cicadellinicola subsp. Homalodisca coagulata.